Reading from the N-terminus, the 269-residue chain is Phosphonates import ATP-binding protein PhnC (269 aa).

The ABC transporter domain occupies 2 to 245 (LVVEGLTCRF…VARELYDLEA (244 aa)). Position 34 to 41 (34 to 41 (GRSGAGKS)) interacts with ATP.

It belongs to the ABC transporter superfamily. Phosphonates importer (TC 3.A.1.9.1) family. In terms of assembly, the complex is composed of two ATP-binding proteins (PhnC), two transmembrane proteins (PhnE) and a solute-binding protein (PhnD).

The protein localises to the cell inner membrane. The catalysed reaction is phosphonate(out) + ATP + H2O = phosphonate(in) + ADP + phosphate + H(+). Part of the ABC transporter complex PhnCDE involved in phosphonates import. Responsible for energy coupling to the transport system. This Bradyrhizobium diazoefficiens (strain JCM 10833 / BCRC 13528 / IAM 13628 / NBRC 14792 / USDA 110) protein is Phosphonates import ATP-binding protein PhnC.